A 962-amino-acid polypeptide reads, in one-letter code: Villin-5 (962 aa).

6 Gelsolin-like repeats span residues 29–79 (FKPV…DEAG), 150–190 (VRVK…QERA), 262–305 (GQTD…DQRK), 396–453 (LQVW…EDRA), 534–574 (MQAI…EDQE), and 636–677 (LKAT…KKKP). The tract at residues 749-785 (KPKRRVPAYSSRSTVPDKSQPRSRSMTFSPDRARVRG) is disordered. A compositionally biased stretch (polar residues) spans 758–776 (SSRSTVPDKSQPRSRSMTF). Residues Ser777 and Ser787 each carry the phosphoserine modification. The segment covering 845–862 (EKPTPTSQEPPTSPSSSE) has biased composition (low complexity). A disordered region spans residues 845 to 917 (EKPTPTSQEP…LKTDSEDPVS (73 aa)). A compositionally biased stretch (polar residues) spans 863-875 (ATNQAEAPKSTSE). Ser883 is subject to Phosphoserine. Positions 889 to 898 (SKEEEAEEES) are enriched in acidic residues. Residues 897 to 962 (ESSLPTFPYE…NKLKMSVNLF (66 aa)) form the HP domain.

This sequence belongs to the villin/gelsolin family. Ubiquitous, but expressed preferentially in pollen and stamens.

It localises to the cytoplasm. The protein resides in the cytoskeleton. In terms of biological role, major actin filament stabilizing factor and regulator of actin dynamics. Binds actin and actin filament bundles in a Ca(2+)-insensitive manner, but caps the barbed end of actin filaments and is able to sever them in a calcium-dependent manner. Required for the construction of actin collars in pollen tubes. Acts synergistically with VLN2 (AC O81644) to regulate polarized pollen tube growth. This is Villin-5 from Arabidopsis thaliana (Mouse-ear cress).